We begin with the raw amino-acid sequence, 178 residues long: S-alkylcysteine N-acetyltransferase (178 aa).

Positions 4-163 (DIFRLATVED…IGVMMHKVLI (160 aa)) constitute an N-acetyltransferase domain.

Belongs to the acetyltransferase family.

It carries out the reaction an S-substituted L-cysteine + acetyl-CoA = an N-acetyl-L-cysteine-S-conjugate + CoA + H(+). The enzyme catalyses S-benzyl-L-cysteine + acetyl-CoA = N-acetyl-S-benzyl-L-cysteine + CoA + H(+). It catalyses the reaction S-methyl-L-cysteine + acetyl-CoA = N-acetyl-S-methyl-L-cysteine + CoA + H(+). It functions in the pathway amino-acid metabolism. In terms of biological role, involved in a cysteine salvage pathway from S-alkylcysteine. Catalyzes the first step in this pathway, i.e. the amine acetylation of an S-alkylcysteine with a preference for S-benzyl-L-cysteine over S-methyl-L-cysteine. This pathway is likely important in the catabolism of alkylated cysteine generated by proteolysis of alkylated glutathione formed in the detoxification of a wide range of electrophiles. This is S-alkylcysteine N-acetyltransferase from Bacillus subtilis (strain 168).